Here is an 82-residue protein sequence, read N- to C-terminus: MAVVLRLQRVGKKQQPQYRIVAIEKKSAVGSEAKEVVGHYNPCNAKAADQIKLNQERYDYWVKVGAKASPTVAALAKKASAK.

Belongs to the bacterial ribosomal protein bS16 family.

This Elusimicrobium minutum (strain Pei191) protein is Small ribosomal subunit protein bS16.